Reading from the N-terminus, the 508-residue chain is Mu-like prophage FluMu protein gp28 (508 aa).

It to phage Mu protein gp28.

This Haemophilus influenzae (strain ATCC 51907 / DSM 11121 / KW20 / Rd) protein is Mu-like prophage FluMu protein gp28.